Here is a 1499-residue protein sequence, read N- to C-terminus: ABC multidrug transporter A-2 (1499 aa).

Disordered stretches follow at residues 1 to 66 (MAMQ…IDQE) and 80 to 107 (QISQ…NSDK). Over residues 16 to 30 (ISSSAGQEVASTIRR) the composition is skewed to polar residues. Residues 31 to 51 (QFTDADADRIVETPLGEKADS) are compositionally biased toward basic and acidic residues. Residues 80–94 (QISQKSAGPTNTFLD) are compositionally biased toward polar residues. One can recognise an ABC transporter 1 domain in the interval 166–415 (LRSILGCRNR…FIDMGFDCPD (250 aa)). Asn-339 is a glycosylation site (N-linked (GlcNAc...) asparagine). The next 5 membrane-spanning stretches (helical) occupy residues 526-546 (MTLA…SVFY), 561-581 (LLFF…LTLW), 606-626 (MIVD…ILYF), 635-655 (GHFF…SNIF), and 669-689 (MVPS…TIPV). The N-linked (GlcNAc...) asparagine glycan is linked to Asn-763. The chain crosses the membrane as a helical span at residues 778–798 (GIILGFFFFFLAAYIICSELV). An ABC transporter 2 domain is found at 857–1100 (FHWQDVCYDI…LIKYFENKGS (244 aa)). 893-900 (GVTGAGKT) serves as a coordination point for ATP. 5 consecutive transmembrane segments (helical) span residues 1193–1213 (YIYS…FTFW), 1227–1247 (FAIF…MPYF), 1268–1288 (AFML…AVPA), 1317–1337 (LLIL…IAGI), and 1353–1373 (LCLI…FWIF). Asn-1414 carries N-linked (GlcNAc...) asparagine glycosylation. A helical transmembrane segment spans residues 1466 to 1486 (GLLFVYIVFNIFAAIFLYWLI).

The protein belongs to the ABC transporter superfamily. ABCG family. PDR (TC 3.A.1.205) subfamily.

It localises to the cell membrane. The catalysed reaction is itraconazole(in) + ATP + H2O = itraconazole(out) + ADP + phosphate + H(+). It catalyses the reaction voriconazole(in) + ATP + H2O = voriconazole(out) + ADP + phosphate + H(+). The efflux inhibitor FK506 impairs the transport activity. Pleiotropic ABC efflux transporter that confers resistance to structurally and functionally unrelated compounds including azoles such as itraconazole, posaconazole, and voriconazole. The protein is ABC multidrug transporter A-2 of Aspergillus fumigatus (strain ATCC MYA-4609 / CBS 101355 / FGSC A1100 / Af293) (Neosartorya fumigata).